The sequence spans 461 residues: D-phenylhydantoinase (461 aa).

A divalent metal cation contacts are provided by H59, H61, and K151. The residue at position 151 (K151) is an N6-carboxylysine. Y156 is a binding site for substrate. A divalent metal cation contacts are provided by H182 and H239. Substrate is bound at residue S286. An a divalent metal cation-binding site is contributed by D313. N335 serves as a coordination point for substrate.

It belongs to the metallo-dependent hydrolases superfamily. Hydantoinase/dihydropyrimidinase family. In terms of assembly, homotetramer. A divalent metal cation serves as cofactor. In terms of processing, carboxylation allows a single lysine to coordinate two divalent metal cations.

The enzyme catalyses D-5-phenylhydantoin + H2O = N-carbamoyl-D-phenylglycine + H(+). Functionally, catalyzes the stereospecific hydrolysis of the cyclic amide bond of D-hydantoin derivatives with an aromatic side chains at the 5'-position. Has no activity on dihydropyrimidines. The physiological function is unknown. The protein is D-phenylhydantoinase of Escherichia coli (strain SE11).